The primary structure comprises 575 residues: Suppressor of tumorigenicity 7 protein-like (575 aa).

A run of 2 helical transmembrane segments spans residues 36-56 and 80-100; these read GLAGTGASLWFVAGLGLLYAL and FYVALTGTSSLISGLIFIFEW. The segment at 125–147 is disordered; the sequence is GTESSISEPGSPSRNRENETSRQ. The span at 126–137 shows a compositional bias: polar residues; the sequence is TESSISEPGSPS.

Belongs to the ST7 family.

The protein localises to the membrane. The sequence is that of Suppressor of tumorigenicity 7 protein-like (ST7L) from Homo sapiens (Human).